Consider the following 671-residue polypeptide: Anti-sigma-I factor RsgI2 (671 aa).

Residues 1–57 (MSHYTGIILKLESDRAIVLTDGLDFMELKLKPGMQRGQHVIFDESDLYSAGLITRYK) are Cytoplasmic-facing. The RsgI N-terminal anti-sigma domain maps to 4 to 51 (YTGIILKLESDRAIVLTDGLDFMELKLKPGMQRGQHVIFDESDLYSAG). Residues 58–78 (SIIMPFSAFAAAAAVFLVILF) traverse the membrane as a helical segment. Over 79–671 (SLRFVSISQE…SGTLYWGIEP (593 aa)) the chain is Extracellular. Disordered stretches follow at residues 290–323 (TEAQ…IPHT) and 359–505 (PVPV…APTE). The segment covering 359–379 (PVPVSTPKPVSTPAYSSTPTP) has biased composition (low complexity). Positions 380–400 (ESTPVPVSTPKPASTPTPAST) are enriched in pro residues. Positions 401–425 (PKPVSTPTHVSTPKPISTPTSTPRP) are enriched in low complexity. Pro residues predominate over residues 426–446 (ASTPKPTSTPTPESTPKPTST). Residues 447–491 (PAPVSTPTSTPIPTYTSTPASTPIPAYTSTPTSIPTLTPATSPAP) show a composition bias toward low complexity. The span at 492–502 (TSSPTPIPSPA) shows a compositional bias: pro residues. Positions 508-671 (LLTKIELQAY…SGTLYWGIEP (164 aa)) constitute a CBM3 domain. Ca(2+) is bound by residues threonine 554, aspartate 556, aspartate 637, serine 640, and aspartate 641.

In terms of assembly, interacts (via RsgI N-terminal anti-sigma domain) with SigI2.

The protein resides in the cell membrane. Anti-sigma factor for SigI2. Negatively regulates SigI2 activity through direct interaction. Binding of the polysaccharide substrate to the extracellular C-terminal sensing domain of RsgI2 may induce a conformational change in its N-terminal cytoplasmic region, leading to the release and activation of SigI2. The protein is Anti-sigma-I factor RsgI2 of Acetivibrio thermocellus (strain ATCC 27405 / DSM 1237 / JCM 9322 / NBRC 103400 / NCIMB 10682 / NRRL B-4536 / VPI 7372) (Clostridium thermocellum).